Here is a 592-residue protein sequence, read N- to C-terminus: Laccase PFICI_06862 (592 aa).

A signal peptide spans 1-19 (MYIQTQFASLLLLAGTSLA). Asparagine 26 carries an N-linked (GlcNAc...) asparagine glycan. Plastocyanin-like domains lie at 32–142 (QWSS…WIAP) and 173–350 (VVIS…RYPG). Cu cation-binding residues include histidine 78, histidine 80, histidine 123, and histidine 125. Residues asparagine 370, asparagine 407, and asparagine 454 are each glycosylated (N-linked (GlcNAc...) asparagine). Residues 445-563 (SDVQGGSMQN…AGQQVVLLEG (119 aa)) enclose the Plastocyanin-like 3 domain. Residue histidine 475 coordinates Cu cation. N-linked (GlcNAc...) asparagine glycosylation is present at asparagine 524.

It belongs to the multicopper oxidase family.

Its subcellular location is the cell surface. The protein operates within pigment biosynthesis; melanin biosynthesis. Its function is as follows. Laccase involved the biosynthesis of dihydroxynaphthalene (DHN)-melanin, a bluish-green pigment forming a dark layer in the conidial wall that protects the conidia from UV radiations. The first step of the pathway is the production of the pentaketide 1,3,6,8-tetrahydroxynaphthalene (1,3,6,8-THN or T4HN) by the polyketide synthase PfmaE though condensation of acetyl-CoA with malonyl-CoA. T4HN is not stable and easily oxidizes into the stable form flaviolin. T4HN is also substrate of the hydroxynaphthalene reductase PfmaG to yield scytalone. The scytalone dehydratase PfmaJ then reduces scytalone to 1,3,8-THN. 1,3,8-THN is then substrate of the hydroxynaphthalene reductase PfmaI to yield vermelone. Vermelone is further converted by the multicopper oxidase PfmaD to 1,8-DHN. Finally the laccase PFICI_06862 transforms 1,8-DHN to DHN-melanin. The roles of the 5-oxoprolinase PfmaA and the proline iminopeptidase PfmaB within the cluster have not been elucidated yet. This Pestalotiopsis fici (strain W106-1 / CGMCC3.15140) protein is Laccase PFICI_06862.